The chain runs to 207 residues: Na(+)-translocating ferredoxin:NAD(+) oxidoreductase complex subunit G (207 aa).

Residues 18 to 38 form a helical membrane-spanning segment; that stretch reads GLILFVISAVAACALALTNYV. Residue Thr185 is modified to FMN phosphoryl threonine.

It belongs to the RnfG family. As to quaternary structure, the complex is composed of six subunits: RnfA, RnfB, RnfC, RnfD, RnfE and RnfG. FMN serves as cofactor.

It is found in the cell membrane. The catalysed reaction is 2 reduced [2Fe-2S]-[ferredoxin] + Na(+)(in) + NAD(+) + H(+) = 2 oxidized [2Fe-2S]-[ferredoxin] + Na(+)(out) + NADH. Its function is as follows. Part of a membrane-bound complex that couples electron transfer with translocation of ions across the membrane. Couples electron transfer from reduced ferredoxin to NAD(+) with electrogenic movement of Na(+) out of the cell. Involved in caffeate respiration. The protein is Na(+)-translocating ferredoxin:NAD(+) oxidoreductase complex subunit G of Acetobacterium woodii (strain ATCC 29683 / DSM 1030 / JCM 2381 / KCTC 1655 / WB1).